The sequence spans 31 residues: Photosystem II reaction center protein T (31 aa).

The chain crosses the membrane as a helical span at residues Ala3–Phe23.

Belongs to the PsbT family. PSII is composed of 1 copy each of membrane proteins PsbA, PsbB, PsbC, PsbD, PsbE, PsbF, PsbH, PsbI, PsbJ, PsbK, PsbL, PsbM, PsbT, PsbX, PsbY, PsbZ, Psb30/Ycf12, at least 3 peripheral proteins of the oxygen-evolving complex and a large number of cofactors. It forms dimeric complexes.

Its subcellular location is the plastid. It is found in the chloroplast thylakoid membrane. In terms of biological role, found at the monomer-monomer interface of the photosystem II (PS II) dimer, plays a role in assembly and dimerization of PSII. PSII is a light-driven water plastoquinone oxidoreductase, using light energy to abstract electrons from H(2)O, generating a proton gradient subsequently used for ATP formation. The polypeptide is Photosystem II reaction center protein T (Gracilaria tenuistipitata var. liui (Red alga)).